Here is a 77-residue protein sequence, read N- to C-terminus: Large ribosomal subunit protein uL24 (77 aa).

The disordered stretch occupies residues 42–61 (KKHQKPSQTNANGGVVESEG).

Belongs to the universal ribosomal protein uL24 family. In terms of assembly, part of the 50S ribosomal subunit.

Functionally, one of two assembly initiator proteins, it binds directly to the 5'-end of the 23S rRNA, where it nucleates assembly of the 50S subunit. In terms of biological role, one of the proteins that surrounds the polypeptide exit tunnel on the outside of the subunit. In Lactobacillus acidophilus (strain ATCC 700396 / NCK56 / N2 / NCFM), this protein is Large ribosomal subunit protein uL24.